Consider the following 169-residue polypeptide: N5-carboxyaminoimidazole ribonucleotide mutase (169 aa).

Serine 16, aspartate 19, and arginine 46 together coordinate substrate.

It belongs to the AIR carboxylase family. Class I subfamily.

It catalyses the reaction 5-carboxyamino-1-(5-phospho-D-ribosyl)imidazole + H(+) = 5-amino-1-(5-phospho-D-ribosyl)imidazole-4-carboxylate. It functions in the pathway purine metabolism; IMP biosynthesis via de novo pathway; 5-amino-1-(5-phospho-D-ribosyl)imidazole-4-carboxylate from 5-amino-1-(5-phospho-D-ribosyl)imidazole (N5-CAIR route): step 2/2. Catalyzes the conversion of N5-carboxyaminoimidazole ribonucleotide (N5-CAIR) to 4-carboxy-5-aminoimidazole ribonucleotide (CAIR). This chain is N5-carboxyaminoimidazole ribonucleotide mutase, found in Escherichia coli O157:H7.